Reading from the N-terminus, the 430-residue chain is Adenylosuccinate synthetase (430 aa).

GTP-binding positions include 13–19 (GDEGKGK) and 41–43 (GHT). The active-site Proton acceptor is Asp-14. Asp-14 and Gly-41 together coordinate Mg(2+). Residues 14–17 (DEGK), 39–42 (NAGH), Thr-130, Arg-144, Gln-225, Thr-240, and Arg-304 each bind IMP. His-42 serves as the catalytic Proton donor. Residue 300-306 (ASTGRPR) coordinates substrate. GTP-binding positions include Arg-306, 332–334 (KLD), and 414–416 (STG).

Belongs to the adenylosuccinate synthetase family. In terms of assembly, homodimer. The cofactor is Mg(2+).

The protein localises to the cytoplasm. The enzyme catalyses IMP + L-aspartate + GTP = N(6)-(1,2-dicarboxyethyl)-AMP + GDP + phosphate + 2 H(+). The protein operates within purine metabolism; AMP biosynthesis via de novo pathway; AMP from IMP: step 1/2. Its function is as follows. Plays an important role in the de novo pathway of purine nucleotide biosynthesis. Catalyzes the first committed step in the biosynthesis of AMP from IMP. This is Adenylosuccinate synthetase from Xanthomonas oryzae pv. oryzae (strain PXO99A).